The following is a 1384-amino-acid chain: CHD3-type chromatin-remodeling factor PICKLE (1384 aa).

Ser23 is subject to Phosphoserine. The PHD-type zinc-finger motif lies at 49 to 96; that stretch reads ENACQACGESTNLVSCNTCTYAFHAKCLVPPLKDASVENWRCPECVSP. 2 Chromo domains span residues 98 to 180 and 190 to 249; these read NEID…NSED and TTVD…RSKD. Residues 285 to 471 enclose the Helicase ATP-binding domain; the sequence is RFSWSKQTHV…FMLMHFLDAG (187 aa). Residue 298 to 305 participates in ATP binding; the sequence is DEMGLGKT. The short motif at 376–383 is the Nuclear localization signal element; it reads KKKKSGQI. Residues 422 to 425 carry the DEAH box motif; it reads DEGH. Residues 599–760 enclose the Helicase C-terminal domain; sequence LLDKMMVKLK…NINQEELDDI (162 aa). Residues 893–912 show a composition bias toward acidic residues; the sequence is AGLEDVSSDGDESYEAESTD. Disordered stretches follow at residues 893–941, 1122–1152, 1313–1344, and 1365–1384; these read AGLE…TPLM, GLQG…NNNA, SDQS…PLRG, and VDVK…MVVD. The span at 1138-1152 shows a compositional bias: polar residues; the sequence is TNQNPGSVITGNNNA. 2 stretches are compositionally biased toward basic and acidic residues: residues 1316-1341 and 1367-1384; these read SKSH…ETKP and VKME…MVVD.

This sequence belongs to the SNF2/RAD54 helicase family. As to quaternary structure, interacts with TAF12B. Mostly expressed in tissue undergoing significant differentiation (meristems and primordia) such as young seedlings, influorescent tissue and young siliques, but not in endosperm and seed coat (at protein level). Levels decrease as organs age. Also present in trichomes.

The protein resides in the nucleus. Functionally, chromatin remodeling factor that represses the expression of embryonic trait genes (such as NFYB9/LEC1) upon and after seed germination and thus enables the developmental switch to post-germinative growth. Silences some MADS-box proteins such as PHE1 and PHE2. Plays a role during carpel differentiation. Regulates late processes in cytokinin signaling. The sequence is that of CHD3-type chromatin-remodeling factor PICKLE (PKL) from Arabidopsis thaliana (Mouse-ear cress).